The primary structure comprises 269 residues: D-aminoacyl-tRNA deacylase (269 aa).

The protein belongs to the DtdA deacylase family. As to quaternary structure, monomer. The cofactor is Zn(2+).

It catalyses the reaction a D-aminoacyl-tRNA + H2O = a tRNA + a D-alpha-amino acid + H(+). The enzyme catalyses glycyl-tRNA(Ala) + H2O = tRNA(Ala) + glycine + H(+). Its function is as follows. D-aminoacyl-tRNA deacylase with broad substrate specificity. By recycling D-aminoacyl-tRNA to D-amino acids and free tRNA molecules, this enzyme counteracts the toxicity associated with the formation of D-aminoacyl-tRNA entities in vivo. This is D-aminoacyl-tRNA deacylase from Caldivirga maquilingensis (strain ATCC 700844 / DSM 13496 / JCM 10307 / IC-167).